The primary structure comprises 674 residues: MVRRAPGASLALLLWVTAVSCSPAGPGAATARRQDEAFSTARLTSRCLSLQITRISAFFKHFQDNGSLAWCQNYKQCSKCLEPCKESWDLKRNHCQSFCEPLFPKKNYECLTSCEFLKYILSVKQGDCPAPEKASGFAAACFESCEADSECSGVKKCCSNGCGHTCQVPKNLYKGVPLKPRKELKFIELQSGDLEVKWSSKFNISIEPVIYVVQRRWNQGIHPSEDDATNWQTVAQTTDERVQLSDIRASRWYQFRVAAVNVHGTRGFTAPSKHFRSSKDPSAPPAPSNIRIANISANNDGTVNVMITWDLPEEPDIPVHHYKVFWSWTYSKYVIPAKKKRRKITDGPQNYVVLEGLQPNSNYNVELQAVTRWGQIRLKSAKVSLHFSTTQDNRNNNEQTSVEKPPKGVVDPYPTFQRRKPTRFLKIGTPFYQDNQLQVKIYWKKSGINMNQFQVHSLLESCTHNDTKGLEKVTELTYENYMILKDLSFSCKYKVTVLPAKSKSRFKAESIFFVTPPCSTFKEKTHKHINCAAEEVPVLPKVLAKPENLSASFIVQEGNITGHFSWKISKAVLHQPMTGFQVTWAEVTTESRQNSLPNSIISQSQILPADHYVLTVPNLRPSMLYRLEVQVLTTGGEGPATIKLFRTPDLPPFLPHRPHLKHHPHRYKPPPEKY.

The signal sequence occupies residues 1-21 (MVRRAPGASLALLLWVTAVSC). 4 disulfides stabilise this stretch: cysteine 47–cysteine 71, cysteine 80–cysteine 99, cysteine 84–cysteine 95, and cysteine 110–cysteine 114. N-linked (GlcNAc...) asparagine glycosylation occurs at asparagine 65. Residues 121-170 (LSVKQGDCPAPEKASGFAAACFESCEADSECSGVKKCCSNGCGHTCQVPK) enclose the WAP domain. 4 consecutive Fibronectin type-III domains span residues 180 to 281 (PRKE…SKDP), 286 to 392 (APSN…TTQD), 418 to 515 (RRKP…FFVT), and 545 to 652 (KPEN…DLPP). N-linked (GlcNAc...) asparagine glycosylation is found at asparagine 203 and asparagine 294. Residues 388-402 (STTQDNRNNNEQTSV) are compositionally biased toward polar residues. Residues 388–413 (STTQDNRNNNEQTSVEKPPKGVVDPY) are disordered. Asparagine 465, asparagine 548, and asparagine 559 each carry an N-linked (GlcNAc...) asparagine glycan. Residues 655–674 (PHRPHLKHHPHRYKPPPEKY) are disordered. Residues 656 to 668 (HRPHLKHHPHRYK) show a composition bias toward basic residues.

It is found in the cell surface. Functionally, may be an adhesion-like molecule with anti-protease activity. In Coturnix japonica (Japanese quail), this protein is Anosmin-1.